We begin with the raw amino-acid sequence, 179 residues long: Apoptosis regulator Bcl-2 homolog (179 aa).

Positions 76–95 (ELFKDLINWGRICGFIVFSA) match the BH1 motif. Positions 126–141 (PWMISHGGQEEFLAFS) match the BH2 motif.

This sequence belongs to the Bcl-2 family. Interacts with host BECN1 (via BH3 homology domain); this interaction allows the virus to inhibit BECN1, and thus autophagy. Interacts with host BID. Interacts with host BAX.

The protein localises to the host mitochondrion. It is found in the host endoplasmic reticulum. Functionally, suppresses apoptosis in host cell to promote the viral replication. Has the ability to potentially bind to all the members of the proapoptotic Bcl-2 family. Inhibits autophagy by interacting with host Beclin 1 (BECN1). The protein is Apoptosis regulator Bcl-2 homolog of African swine fever virus (isolate Tick/South Africa/Pretoriuskop Pr4/1996) (ASFV).